The sequence spans 79 residues: Putative membrane protein insertion efficiency factor (79 aa).

Belongs to the UPF0161 family.

Its subcellular location is the cell inner membrane. Functionally, could be involved in insertion of integral membrane proteins into the membrane. The chain is Putative membrane protein insertion efficiency factor from Rippkaea orientalis (strain PCC 8801 / RF-1) (Cyanothece sp. (strain PCC 8801)).